A 1063-amino-acid polypeptide reads, in one-letter code: Retinoblastoma-like protein 1 (1063 aa).

Phosphothreonine is present on residues threonine 332, threonine 369, and threonine 385. Residues 383 to 584 (VTTPVASATQ…WEALHASANR (202 aa)) form a domain A region. Residues 383–944 (VTTPVASATQ…GRVKSFALKY (562 aa)) form a pocket; binds T and E1A region. Residues 585–779 (VPSCEEVIFP…AQDAHLTGVS (195 aa)) form a spacer region. 4 positions are modified to phosphoserine: serine 640, serine 650, serine 748, and serine 761. The tract at residues 780–944 (KPKRTGSLAL…GRVKSFALKY (165 aa)) is domain B. A phosphoserine mark is found at serine 959, serine 970, and serine 983. Phosphothreonine is present on threonine 992. Residues serine 1004 and serine 1036 each carry the phosphoserine modification.

It belongs to the retinoblastoma protein (RB) family. As to quaternary structure, component of the DREAM complex (also named LINC complex) at least composed of E2F4, E2F5, LIN9, LIN37, LIN52, LIN54, MYBL1, MYBL2, RBL1, RBL2, RBBP4, TFDP1 and TFDP2. The complex exists in quiescent cells where it represses cell cycle-dependent genes. It dissociates in S phase when LIN9, LIN37, LIN52 and LIN54 form a subcomplex that binds to MYBL2. Interacts with AATF. Interacts with KDM5A. Interacts with KMT5B and KMT5C. Interacts with USP4. Interacts with RBBP9. Cell-cycle arrest properties are inactivated by phosphorylation on Thr-332, Ser-640, Ser-959 and Ser-970 by CDK4. Highly expressed in fetal heart and liver. Expressed at low levels in all other fetal tissues except skeletal muscle. High levels in neonatal spleen and thymus with low levels in other tissues. In adult, highly expressed in testis. Barely detectable in other tissues.

Its subcellular location is the nucleus. Its function is as follows. Key regulator of entry into cell division. Directly involved in heterochromatin formation by maintaining overall chromatin structure and, in particular, that of constitutive heterochromatin by stabilizing histone methylation. Recruits and targets histone methyltransferases KMT5B and KMT5C, leading to epigenetic transcriptional repression. Controls histone H4 'Lys-20' trimethylation. Probably acts as a transcription repressor by recruiting chromatin-modifying enzymes to promoters. Potent inhibitor of E2F-mediated trans-activation. May act as a tumor suppressor. The chain is Retinoblastoma-like protein 1 (Rbl1) from Mus musculus (Mouse).